A 308-amino-acid polypeptide reads, in one-letter code: Cytochrome b (308 aa).

4 consecutive transmembrane segments (helical) span residues 1–21, 45–66, 81–101, and 146–166; these read FGLL…LLAA, WLIR…YLHI, WNIG…GYVX, and FFAL…VHLT. Residues histidine 51 and histidine 65 each contribute to the heme b site. Heme b contacts are provided by histidine 150 and histidine 164. Histidine 169 lines the a ubiquinone pocket. 3 helical membrane passes run 194–214, 256–276, and 288–308; these read TKDV…ALFS, LGGV…PFLH, and LSQI…WVSN.

This sequence belongs to the cytochrome b family. In terms of assembly, the cytochrome bc1 complex contains 11 subunits: 3 respiratory subunits (MT-CYB, CYC1 and UQCRFS1), 2 core proteins (UQCRC1 and UQCRC2) and 6 low-molecular weight proteins (UQCRH/QCR6, UQCRB/QCR7, UQCRQ/QCR8, UQCR10/QCR9, UQCR11/QCR10 and a cleavage product of UQCRFS1). This cytochrome bc1 complex then forms a dimer. Requires heme b as cofactor.

Its subcellular location is the mitochondrion inner membrane. In terms of biological role, component of the ubiquinol-cytochrome c reductase complex (complex III or cytochrome b-c1 complex) that is part of the mitochondrial respiratory chain. The b-c1 complex mediates electron transfer from ubiquinol to cytochrome c. Contributes to the generation of a proton gradient across the mitochondrial membrane that is then used for ATP synthesis. In Pomatostomus ruficeps (Chestnut-crowned babbler), this protein is Cytochrome b (MT-CYB).